The following is a 211-amino-acid chain: Prolactin-3C1 (211 aa).

The N-terminal stretch at 1 to 29 (MQLSLTQARTWKGLLLLVSCMILWISVTP) is a signal peptide. Residues Asn-77 and Asn-173 are each glycosylated (N-linked (GlcNAc...) asparagine). The cysteines at positions 80 and 187 are disulfide-linked.

This sequence belongs to the somatotropin/prolactin family. In terms of tissue distribution, expressed exclusively in decidual tissue.

It is found in the secreted. This Rattus norvegicus (Rat) protein is Prolactin-3C1 (Prl3c1).